Here is a 540-residue protein sequence, read N- to C-terminus: Chaperonin GroEL 2/3 (540 aa).

Residues 30 to 33 (TLGP), lysine 51, 87 to 91 (DGTTT), glycine 415, 479 to 481 (NAA), and aspartate 495 each bind ATP.

This sequence belongs to the chaperonin (HSP60) family. Forms a cylinder of 14 subunits composed of two heptameric rings stacked back-to-back. Interacts with the co-chaperonin GroES.

The protein resides in the cytoplasm. The enzyme catalyses ATP + H2O + a folded polypeptide = ADP + phosphate + an unfolded polypeptide.. Functionally, together with its co-chaperonin GroES, plays an essential role in assisting protein folding. The GroEL-GroES system forms a nano-cage that allows encapsulation of the non-native substrate proteins and provides a physical environment optimized to promote and accelerate protein folding. This Paraburkholderia xenovorans (strain LB400) protein is Chaperonin GroEL 2/3.